The sequence spans 213 residues: Amelotin (213 aa).

The first 16 residues, methionine 1–serine 16, serve as a signal peptide directing secretion. Disordered regions lie at residues asparagine 22–glutamine 43 and glycine 162–glutamine 213. Polar residues predominate over residues threonine 33–glutamine 43. Residues glycine 169–valine 180 show a composition bias toward low complexity.

This sequence belongs to the amelotin family. Post-translationally, phosphorylated by FAM20C in vitro. In terms of processing, O-glycosylated. As to expression, specifically expressed in maturation-stage ameloblasts.

The protein resides in the secreted. In terms of biological role, is a promoter of calcium phosphate mineralization, playing a critical role in the formation of the compact, mineralized, aprismatic enamel surface layer during the maturation stage of amelogenesis. The chain is Amelotin (Amtn) from Mus musculus (Mouse).